The chain runs to 201 residues: Protein Thf1 (201 aa).

Positions Ile174–Leu201 form a coiled coil.

It belongs to the THF1 family.

Its function is as follows. May be involved in photosynthetic membrane biogenesis. The protein is Protein Thf1 of Prochlorococcus marinus (strain MIT 9312).